Here is a 123-residue protein sequence, read N- to C-terminus: Large ribosomal subunit protein uL29 (123 aa).

An N6-acetyllysine modification is found at Lys19. Lys25 is covalently cross-linked (Glycyl lysine isopeptide (Lys-Gly) (interchain with G-Cter in SUMO2)). A Phosphoserine modification is found at Ser29. The residue at position 43 (Lys43) is an N6-acetyllysine. The disordered stretch occupies residues 85–123 (PKKTRAMRRRLNKHEESLKTKKQQRKERLYPLRKYAVKA). The span at 86 to 96 (KKTRAMRRRLN) shows a compositional bias: basic residues.

Belongs to the universal ribosomal protein uL29 family. Component of the large ribosomal subunit.

The protein resides in the cytoplasm. In terms of biological role, component of the large ribosomal subunit. The ribosome is a large ribonucleoprotein complex responsible for the synthesis of proteins in the cell. The sequence is that of Large ribosomal subunit protein uL29 (RPL35) from Oryctolagus cuniculus (Rabbit).